Reading from the N-terminus, the 283-residue chain is DNA repair protein RecO (283 aa).

The segment covering 254–264 has biased composition (polar residues); it reads SSPASVGSSAT. Positions 254–283 are disordered; it reads SSPASVGSSATRYFAQGDTDENDRDPPGAR.

It belongs to the RecO family.

Its function is as follows. Involved in DNA repair and RecF pathway recombination. This chain is DNA repair protein RecO, found in Roseiflexus sp. (strain RS-1).